We begin with the raw amino-acid sequence, 1271 residues long: MEATGVLPFVRGVDLSGNDFKGGYFPENVKAMTSLRWLKLNRTGLCYLPEELAALQKLEHLSVSHNHLTTLHGELSSLPSLRAIVARANSLKNSGVPDDIFKLDDLSVLDLSHNQLTECPRELENAKNMLVLNLSHNGIDSIPNQLFINLTDLLYLDLSENRLESLPPQMRRLVHLQTLVLNGNPLLHAQLRQLPAMMALQTLHLRNTQRTQSNLPTSLEGLSNLSDVDLSCNDLTRVPECLYTLPSLRRLNLSSNQIAELSLCIDQWVHLETLNLSRNQLTSLPSAICKLTKLKKLYLNSNKLDFDGLPSGIGKLTSLEEFMAANNNLELIPESLCRCPKLKKLVLNKNRLVTLPEAIHFLTEIQVLDVRENPSLVMPPKPADRTAEWYNIDFSLQNQLRLAGASPATVAAAAAVGSGSKDPLARKMRLRRRKDSAQDVQAKQVLKGMSDVAQEKNKNQEESIDARAPGGKVRRWDQGLEKPRLDYSEFFTEDVGQLPGLTIWQIENFVPVLVEEAFHGKFYEADCYIVLKTFLDDSGSLNWEIYYWIGGEATLDKKACSAIHAVNLRNYLGAECRTVREEMGDESEEFLQVFDNDISYIEGGTASGFYTVEDTHYVTRMYRVYGKKNIKLEPVPLKGSSLDPRFVFLLDQGLDIYVWRGAQATLSNTTKARLFAEKINKNERKGKAEITLLVQGQEPPGFWDVLGGEPSEIKNHVPDDFWPPQPKLYKVGLGLGYLELPQINYKLSVEHKKRPKVELMPGMRLLQSLLDTRCVYILDCWSDVFIWLGRKSPRLVRAAALKLGQELCGMLHRPRHTVVSRSLEGTEAQVFKAKFKNWDDVLTVDYTRNAEAVLQGQGLSGKVKRDTEKTDQMKADLTALFLPRQPPMPLAEAEQLMEEWNEDLDGMEGFVLEGRKFTRLPEEEFGHFYTQDCYVFLCRYWVPVEYEEEEKTEDKEGKASAEAREGEEAAAEAEEKQPEEDFQCIVYFWQGREASNMGWLTFTFSLQKKFESLFPGKLEVVRMTQQQENPKFLSHFKRKFIIHRGKRKVTQGTLQPTLYQIRTNGSALCTRCIQINTDSSLLNSEFCFILKVPFESEDNQGIVYAWVGRASDPDEAKLAEDILNTMFDASYSKQVINEGEEPENFFWVGIGAQKPYDDDAEYMKHTRLFRCSNEKGYFAVTEKCSDFCQDDLADDDIMLLDNGQEVYMWVGTQTSQVEIKLSLKACQVYIQHTRSKEHERPRRLRLVRKGNEQRAFTRCFHAWSTFRQAPA.

Residue M1 is modified to N-acetylmethionine. The interval 1–427 (MEATGVLPFV…SGSKDPLARK (427 aa)) is interaction with LRRFIP1 and LRRFIP2. 16 LRR repeats span residues 7–32 (LPFV…VKAM), 33–55 (TSLR…LAAL), 56–78 (QKLE…LSSL), 80–103 (SLRA…IFKL), 104–126 (DDLS…LENA), 127–149 (KNML…LFIN), 150–173 (LTDL…MRRL), 175–196 (HLQT…QLPA), 197–222 (MMAL…LEGL), 223–245 (SNLS…LYTL), 247–268 (SLRR…IDQW), 269–291 (VHLE…ICKL), 293–316 (KLKK…IGKL), 317–339 (TSLE…LCRC), 340–363 (PKLK…HFLT), and 365–385 (IQVL…PADR). K21 carries the post-translational modification N6-acetyllysine. S406 carries the phosphoserine modification. S436 bears the Phosphoserine; by SGK3 mark. The interval 495-827 (VGQLPGLTIW…VVSRSLEGTE (333 aa)) is interaction with ACTL6A. Gelsolin-like repeat units lie at residues 509–591 (FVPV…EEFL), 629–703 (NIKL…PGFW), and 759–831 (LMPG…AQVF). S860 carries the phosphoserine modification. The disordered stretch occupies residues 951–977 (KTEDKEGKASAEAREGEEAAAEAEEKQ). Residues 952 to 967 (TEDKEGKASAEAREGE) show a composition bias toward basic and acidic residues. Residues 968–977 (EAAAEAEEKQ) show a composition bias toward acidic residues. Residues 1183–1256 (KCSDFCQDDL…VRKGNEQRAF (74 aa)) form a Gelsolin-like 4 repeat.

In terms of assembly, interacts with actin, ACTL6A and NCOA2. Interacts with CARM1. Interacts with LRRFIP1, LRRFIP2 and MYD88. Upon LPS stimulation, LRRFIP2 competes for MYD88-binding; LRRFIP1 constitutively blocks the interaction with MyD88, even in the absence of LPS. Interacts with the nuclear receptors ESR1 and THRB. Interacts with SGK3. Interacts (via the gelsolin-like region) with TMOD1 and TMOD3. Interacts with LMOD2, VCL, GSN and DES. As to expression, expressed in blastocyst.

It localises to the nucleus. The protein resides in the cytoplasm. The protein localises to the cytoskeleton. Its subcellular location is the microtubule organizing center. It is found in the centrosome. It localises to the cell junction. The protein resides in the focal adhesion. The protein localises to the cell projection. Its subcellular location is the podosome. Is a regulator of actin polymerization, required for proper myofibril organization and regulation of the length of sarcomeric thin filaments. It also plays a role in the assembly of cardiomyocyte cell adhesion complexes. Regulates cytoskeletal rearrangements involved in cytokinesis and cell migration, by inhibiting Rac1-dependent paxillin phosphorylation. May play a role as coactivator in transcriptional activation by hormone-activated nuclear receptors (NR) and acts in cooperation with NCOA2 and CARM1. Involved in estrogen hormone signaling. This Mus musculus (Mouse) protein is Protein flightless-1 homolog (Flii).